The following is a 166-amino-acid chain: Photosystem I assembly protein Ycf3 (166 aa).

TPR repeat units lie at residues 35-68 (AFVY…EVDP), 72-105 (SFIF…NPSL), and 120-153 (GEQA…APLN).

The protein belongs to the Ycf3 family.

The protein localises to the plastid. Its subcellular location is the chloroplast thylakoid membrane. Its function is as follows. Essential for the assembly of the photosystem I (PSI) complex. May act as a chaperone-like factor to guide the assembly of the PSI subunits. In Ostreococcus tauri, this protein is Photosystem I assembly protein Ycf3.